We begin with the raw amino-acid sequence, 361 residues long: tRNA-specific 2-thiouridylase MnmA (361 aa).

ATP is bound by residues 8–15 (AMSGGVDS) and methionine 35. Positions 95-97 (NPD) are interaction with target base in tRNA. Residue cysteine 100 is the Nucleophile of the active site. Cysteines 100 and 196 form a disulfide. Glycine 124 is an ATP binding site. Positions 146 to 148 (KDQ) are interaction with tRNA. Catalysis depends on cysteine 196, which acts as the Cysteine persulfide intermediate. Residues 303-304 (RY) are interaction with tRNA.

Belongs to the MnmA/TRMU family.

The protein resides in the cytoplasm. The catalysed reaction is S-sulfanyl-L-cysteinyl-[protein] + uridine(34) in tRNA + AH2 + ATP = 2-thiouridine(34) in tRNA + L-cysteinyl-[protein] + A + AMP + diphosphate + H(+). In terms of biological role, catalyzes the 2-thiolation of uridine at the wobble position (U34) of tRNA, leading to the formation of s(2)U34. The polypeptide is tRNA-specific 2-thiouridylase MnmA (Chlamydia pneumoniae (Chlamydophila pneumoniae)).